The chain runs to 139 residues: Cell division protein SepF (139 aa).

It belongs to the SepF family. In terms of assembly, homodimer. Interacts with FtsZ.

The protein resides in the cytoplasm. Functionally, cell division protein that is part of the divisome complex and is recruited early to the Z-ring. Probably stimulates Z-ring formation, perhaps through the cross-linking of FtsZ protofilaments. Its function overlaps with FtsA. The protein is Cell division protein SepF of Coprothermobacter proteolyticus (strain ATCC 35245 / DSM 5265 / OCM 4 / BT).